We begin with the raw amino-acid sequence, 1121 residues long: Piwi-like protein ergo-1 (1121 aa).

Residues 1–14 (MSYNNGGGGGGGGY) are compositionally biased toward gly residues. The segment at 1–134 (MSYNNGGGGG…GNRGGGGGRV (134 aa)) is disordered. 2 stretches are compositionally biased toward basic and acidic residues: residues 15 to 29 (RNDRDDRYHNNDRQN) and 40 to 77 (YNDDRRDNRYDDRRGSNNDRGCYDQHDRRGSSNDDRRG). The segment covering 99–112 (GSNQRNDNYGNNRG) has biased composition (polar residues). The segment covering 125 to 134 (GNRGGGGGRV) has biased composition (gly residues). Residues 426–534 (VMTQILTKMT…MPLELVSYIV (109 aa)) form the PAZ domain. Residues 774–1081 (NVLKYLADNK…AAKRAKETLD (308 aa)) enclose the Piwi domain.

It belongs to the argonaute family. Piwi subfamily. As to quaternary structure, interacts with rde-12. Interacts with rde-10. In terms of tissue distribution, highly expressed in the germline in hermaphrodites.

It is found in the cytoplasm. Functionally, argonaute protein required for gene silencing in the endogenous RNA interference (RNAi) pathway. Involved in the 26G RNAi pathway and associates with both unmethylated and methylated 26G small interfering RNAs (26G-siRNAs), which are a class of 26 nucleotide siRNAs that possess a guanine residue at the 5'-end. Associated 26G-siRNAs are methylated by the methyltransferase henn-1, which stabilizes the siRNAs. Association with 26G-siRNAs is required for the biogenesis of secondary 22G-siRNAs (a class of 22 nucleotide siRNAs that possess a triphosphorylated guanine residue at the 5'-end). May be involved in passenger strand cleavage of target 26G-siRNAs. In Caenorhabditis elegans, this protein is Piwi-like protein ergo-1.